A 542-amino-acid chain; its full sequence is MAAKEVRFHTDAREKMLRGVDILANAVKVTLGPKGRNVVLDKSFGAPRITKDGVTVAKEVELEDKFENMGAQMVREVASKTSDIAGDGTTTATVLAQAIVKEGAKAVASGMNPMDLKRGIDKAVDAIVEELKTNARRVTKNDEIAQVGTISANGDIEIGRFLAEAVEKVGNEGVITVEEAKTAVTELEVVEGMQFDRGYLSPYFVTNPDKMRVELEEPYLLIHEKKLSNLQALLPVLESVVQSGKPLLIIAEDVEGEALATPVVNKLRGGLKIAAVKAPGFGDRRKAMLEDIAILTGGTAISEDLGIKLENVTLNMLGRAKKVVVEKENTTIVDGAGSKSEIQGRVAQIRAQIEETTSDYDREKLQERLAKLAGGVAVIRVGGSTEVEVKERKDRVDDAMHATRAAVEEGVLPGGGVALLRAVKALDSIRTENADQKHGIEIVRRALEAPVRQIAENAGAEGSIIVGKLREKTEFGFGWNAQTNEFGDLYDQGVIDPVKVVRTALQDAASVAGLLITTEAMVAEKPKKDAPLPPMPGGGMDF.

ATP contacts are provided by residues 30-33 (TLGP), lysine 51, 87-91 (DGTTT), glycine 415, and aspartate 496.

Belongs to the chaperonin (HSP60) family. As to quaternary structure, forms a cylinder of 14 subunits composed of two heptameric rings stacked back-to-back. Interacts with the co-chaperonin GroES.

It is found in the cytoplasm. It catalyses the reaction ATP + H2O + a folded polypeptide = ADP + phosphate + an unfolded polypeptide.. Functionally, together with its co-chaperonin GroES, plays an essential role in assisting protein folding. The GroEL-GroES system forms a nano-cage that allows encapsulation of the non-native substrate proteins and provides a physical environment optimized to promote and accelerate protein folding. The chain is Chaperonin GroEL 1 from Sinorhizobium fredii (strain NBRC 101917 / NGR234).